The sequence spans 375 residues: Anhydro-N-acetylmuramic acid kinase (375 aa).

14–21 (GTSMDGAD) serves as a coordination point for ATP.

The protein belongs to the anhydro-N-acetylmuramic acid kinase family.

It catalyses the reaction 1,6-anhydro-N-acetyl-beta-muramate + ATP + H2O = N-acetyl-D-muramate 6-phosphate + ADP + H(+). Its pathway is amino-sugar metabolism; 1,6-anhydro-N-acetylmuramate degradation. The protein operates within cell wall biogenesis; peptidoglycan recycling. Its function is as follows. Catalyzes the specific phosphorylation of 1,6-anhydro-N-acetylmuramic acid (anhMurNAc) with the simultaneous cleavage of the 1,6-anhydro ring, generating MurNAc-6-P. Is required for the utilization of anhMurNAc either imported from the medium or derived from its own cell wall murein, and thus plays a role in cell wall recycling. In Cupriavidus pinatubonensis (strain JMP 134 / LMG 1197) (Cupriavidus necator (strain JMP 134)), this protein is Anhydro-N-acetylmuramic acid kinase.